The primary structure comprises 30 residues: Cliotide T6 (30 aa).

Residues 1 to 30 (SIPCGESCVYIPCITTIVGCSCKDKVCYKN) constitute a cross-link (cyclopeptide (Ser-Asn)). 3 disulfide bridges follow: Cys4–Cys20, Cys8–Cys22, and Cys13–Cys27.

In terms of processing, contains 3 disulfide bonds. Post-translationally, this is a cyclic peptide. As to expression, expressed in pod but not in flower, stem, shoot, leaf, seed, root and nodule (at protein level).

Its function is as follows. Probably participates in a plant defense mechanism. This chain is Cliotide T6, found in Clitoria ternatea (Butterfly pea).